The sequence spans 451 residues: Plasmepsin III (451 aa).

At 1–37 (MNLTIKEEDFTNTFMKNEESFNTFRVTKVKRWNAKRL) the chain is on the cytoplasmic side. A propeptide spanning residues 1–123 (MNLTIKEEDF…KGLTKKSYLG (123 aa)) is cleaved from the precursor. A helical; Signal-anchor for type II membrane protein transmembrane segment spans residues 38 to 58 (FKILFVTVFIVLAGGFSYYIF). At 59 to 451 (ENFVFQKNRK…TVGFALAKNL (393 aa)) the chain is on the lumenal side. A Peptidase A1 domain is found at 139 to 446 (SFGEAKLGDN…DYDNHTVGFA (308 aa)). Disulfide bonds link Cys170–Cys175 and Cys372–Cys408.

It belongs to the peptidase A1 family. As to quaternary structure, probable homodimer; in the zymogen form. Monomer; in the active form. Acidification disrupts homodimerization. Component of the hemozoin formation complex (HFC) composed of falcipains FP2A and/or FP2B, plasmepsins PMII, PMIII/HAP and PMIV, heme detoxifying protein HDP and falcilysin FLN. The HFC complex is involved in hemoglobin degradation and detoxification of heme in the food vacuole during the asexual blood stage. Post-translationally, proteolytically cleaved into the soluble active mature form by cysteine proteases in the digestive vacuole of trophozoites. Proteolysis requires an acidic environment. Transprocessing may serve as an alternate activation system.

The protein resides in the membrane. Its subcellular location is the vacuole lumen. It carries out the reaction Hydrolysis of the bonds linking certain hydrophobic residues in hemoglobin or globin. Also cleaves small molecules substrates such as Ala-Leu-Glu-Arg-Thr-Phe-|-Phe(NO2)-Ser-Phe-Pro-Thr.. With respect to regulation, dimerization causes loss of catalytic activity. Inhibited by pepstatin A. Inhibited by Zn(2+). Functionally, during the asexual blood stage, catalyzes the cleavage of denatured host hemoglobin (Hb) or globins. Digestion of host Hb is an essential step which provides the parasite with amino acids for protein synthesis, and regulates osmolarity. The polypeptide is Plasmepsin III (Plasmodium falciparum (isolate 3D7)).